The sequence spans 385 residues: Enoyl-[acyl-carrier-protein] reductase, mitochondrial (385 aa).

Y78 (proton donor) is an active-site residue. Residues N162, 190–193 (TSGV), 213–215 (RDR), 288–291 (YGGM), 313–315 (YWV), and K378 each bind NADP(+).

It belongs to the zinc-containing alcohol dehydrogenase family. Quinone oxidoreductase subfamily. Homodimer.

The protein resides in the mitochondrion matrix. It catalyses the reaction a 2,3-saturated acyl-[ACP] + NADP(+) = a (2E)-enoyl-[ACP] + NADPH + H(+). Its function is as follows. Catalyzes the NADPH-dependent reduction of trans-2-enoyl thioesters in mitochondrial fatty acid synthesis (fatty acid synthesis type II). Fatty acid chain elongation in mitochondria uses acyl carrier protein (ACP) as an acyl group carrier, but the enzyme accepts both ACP and CoA thioesters as substrates in vitro. Required for respiration and the maintenance of the mitochondrial compartment. The polypeptide is Enoyl-[acyl-carrier-protein] reductase, mitochondrial (ETR1) (Candida glabrata (strain ATCC 2001 / BCRC 20586 / JCM 3761 / NBRC 0622 / NRRL Y-65 / CBS 138) (Yeast)).